We begin with the raw amino-acid sequence, 847 residues long: MDIRNEFLQFFQNKGHAVYPSMPLVPNDATLLFTNAGMVQFKDIFTGIVPRPSIPRAASSQLCMRAGGKHNDLENVGYTARHHTLFEMLGNFSFGDYFKEEAILFAWEFVTKNLGFKPKDLYISVHEKDDEAVKLWEKFVPVDRIKKMGDKDNFWQMGDSGPCGPCSEIYIDQGEKHFKGSEDYFGGEGDRFLEIWNLVFMQYERSNDGVLSPLPKPSIDTGMGLERVQALLEHKLNNFDSSLFAPLMEEISELTSLDYASEFQPSFRVVADHARAVAFLLAQGVHFNKEGRGYVLRRILRRALRHGYLMGLKEAFLYKVVGVVCEQFANTHAYLKESKEMVVKECFEEEEHFLETLESGMELFNLSLKHLNENKIFDGKIAFKLYDTFGFPLDLTNDMLRSHGACADMQGFELCMQEQVKRSKASWKGKQNNADFSAILNAYAPNVFVGYETTECSAKVLGFFDSDFKEITDANPNQEVWVLLEKTPFYAEGGGAIGDRGALFKDNGEVAIVLDTKNFFGLNFSLLEIKKALKKGDQVIAQVSDERFEIAKHHSATHLLQSALREVLGSHVSQAGSLVESKRLRFDFSHAKALNDEELEKVEDLVNAQIFKHLNSQVEHMPLNQAKDKGALALFSEKYAENVRVVSFKEASIELCGGIHVENTGLIGGFRIVKESGVSSGVRRIEAVCGKAFYQLAKEENKELKNAKTLLKNNDVIAGINKLKESVKNSQKAPVSMDLPVEKIHGVNLVVGVVEQGDIKEMIDRLKSKHERLLAMVFKKENERITLACGVKNAPIKANVWANEVAQILGGKGGGRGDFASAGGKDIENLQAALNLAKNTALKALEG.

Zn(2+) contacts are provided by H554, H558, C656, and H660.

This sequence belongs to the class-II aminoacyl-tRNA synthetase family. It depends on Zn(2+) as a cofactor.

The protein localises to the cytoplasm. The catalysed reaction is tRNA(Ala) + L-alanine + ATP = L-alanyl-tRNA(Ala) + AMP + diphosphate. Catalyzes the attachment of alanine to tRNA(Ala) in a two-step reaction: alanine is first activated by ATP to form Ala-AMP and then transferred to the acceptor end of tRNA(Ala). Also edits incorrectly charged Ser-tRNA(Ala) and Gly-tRNA(Ala) via its editing domain. In Helicobacter pylori (strain ATCC 700392 / 26695) (Campylobacter pylori), this protein is Alanine--tRNA ligase.